The primary structure comprises 294 residues: 3-methyl-2-oxobutanoate hydroxymethyltransferase 1 (294 aa).

Asp-55 provides a ligand contact to Mg(2+). 3-methyl-2-oxobutanoate contacts are provided by residues 55–56 and Lys-123; that span reads DS. Glu-192 serves as the catalytic Proton acceptor.

This sequence belongs to the PanB family. Homodecamer; pentamer of dimers. The cofactor is Mg(2+).

It localises to the cytoplasm. The enzyme catalyses 3-methyl-2-oxobutanoate + (6R)-5,10-methylene-5,6,7,8-tetrahydrofolate + H2O = 2-dehydropantoate + (6S)-5,6,7,8-tetrahydrofolate. It participates in cofactor biosynthesis; (R)-pantothenate biosynthesis; (R)-pantoate from 3-methyl-2-oxobutanoate: step 1/2. In terms of biological role, catalyzes the reversible reaction in which hydroxymethyl group from 5,10-methylenetetrahydrofolate is transferred onto alpha-ketoisovalerate to form ketopantoate. The sequence is that of 3-methyl-2-oxobutanoate hydroxymethyltransferase 1 from Methylibium petroleiphilum (strain ATCC BAA-1232 / LMG 22953 / PM1).